We begin with the raw amino-acid sequence, 399 residues long: LEM domain-containing protein Bocksbeutel (399 aa).

Positions 4 to 48 (LSYLDTLGNKELLAKCLEHGLPGVPVTDSTRSVIIRRLKAKITGV) constitute an LEM domain. Disordered regions lie at residues 49–103 (PLNK…EQSR), 119–141 (SVQT…SYMV), and 233–287 (NSTS…SNLA). Polar residues-rich tracts occupy residues 68–77 (HGSQVTTPTS) and 89–99 (GRTSSNNNKIS). Polar residues predominate over residues 233–256 (NSTSYEESSTYNPKLSPISPRNTF). A helical transmembrane segment spans residues 377-397 (FYLILVVSVMLATMVYVVLTP).

The protein localises to the nucleus inner membrane. It is found in the cytoplasm. It localises to the nucleus. Its subcellular location is the nucleoplasm. The protein resides in the endoplasmic reticulum. Functionally, inner nuclear membrane protein. May have a role in maintaining the structural integrity of the nuclear lamina. During pupal development, plays essential and redundant functions with the other LEM domain proteins; MAN1 and Ote. Also has a redundant but important role with Ote in larval development. The chain is LEM domain-containing protein Bocksbeutel from Drosophila melanogaster (Fruit fly).